Here is a 65-residue protein sequence, read N- to C-terminus: uncharacterized protein (65 aa).

2 helical membrane passes run 4–24 (TIWL…MLYP) and 45–65 (FGGG…KTIG).

The protein localises to the cell membrane. This is an uncharacterized protein from Escherichia coli O157:H7.